The sequence spans 302 residues: Recombination-associated protein RdgC (302 aa).

Belongs to the RdgC family.

It localises to the cytoplasm. The protein localises to the nucleoid. Functionally, may be involved in recombination. This chain is Recombination-associated protein RdgC, found in Xylella fastidiosa (strain M23).